A 709-amino-acid polypeptide reads, in one-letter code: Nicastrin (709 aa).

Residues methionine 1–glycine 33 form the signal peptide. The Extracellular segment spans residues asparagine 34–glutamate 669. N-linked (GlcNAc...) asparagine glycosylation is found at asparagine 45 and asparagine 55. 2 disulfides stabilise this stretch: cysteine 50/cysteine 62 and cysteine 140/cysteine 159. N-linked (GlcNAc...) asparagine glycans are attached at residues asparagine 187, asparagine 200, and asparagine 204. Intrachain disulfides connect cysteine 195–cysteine 213 and cysteine 230–cysteine 248. N-linked (GlcNAc...) asparagine glycosylation is found at asparagine 264, asparagine 387, asparagine 417, asparagine 435, asparagine 464, asparagine 506, asparagine 530, asparagine 562, asparagine 573, asparagine 580, and asparagine 612. An intrachain disulfide couples cysteine 586 to cysteine 620. The chain crosses the membrane as a helical span at residues leucine 670–isoleucine 690. At asparagine 691–tyrosine 709 the chain is on the cytoplasmic side.

Belongs to the nicastrin family. In terms of assembly, component of the gamma-secretase complex. The functional gamma-secretase complex is composed of at least four polypeptides: a presenilin homodimer (PSEN1 or PSEN2), nicastrin (NCSTN), APH1 (APH1A or APH1B) and PSENEN/PEN2. Binds to proteolytic processed C-terminal fragments C83 and C99 of the amyloid precursor protein (APP). Interacts with PSEN1 and PSEN2. Post-translationally, N-glycosylated. Detected in brain (at protein level). Widely expressed.

The protein localises to the membrane. The protein resides in the cytoplasmic vesicle membrane. Its subcellular location is the melanosome. Functionally, essential subunit of the gamma-secretase complex, an endoprotease complex that catalyzes the intramembrane cleavage of integral membrane proteins such as Notch receptors and APP (amyloid-beta precursor protein). The gamma-secretase complex plays a role in Notch and Wnt signaling cascades and regulation of downstream processes via its role in processing key regulatory proteins, and by regulating cytosolic CTNNB1 levels. The polypeptide is Nicastrin (NCSTN) (Homo sapiens (Human)).